Here is a 298-residue protein sequence, read N- to C-terminus: N-acetylmuramic acid 6-phosphate etherase (298 aa).

The region spanning 55–218 is the SIS domain; that stretch reads IHAQVSGGGR…STGLMIKSGK (164 aa). The active-site Proton donor is the Glu83. Glu114 is an active-site residue.

It belongs to the GCKR-like family. MurNAc-6-P etherase subfamily. As to quaternary structure, homodimer.

It catalyses the reaction N-acetyl-D-muramate 6-phosphate + H2O = N-acetyl-D-glucosamine 6-phosphate + (R)-lactate. It functions in the pathway amino-sugar metabolism; 1,6-anhydro-N-acetylmuramate degradation. It participates in amino-sugar metabolism; N-acetylmuramate degradation. The protein operates within cell wall biogenesis; peptidoglycan recycling. Its function is as follows. Specifically catalyzes the cleavage of the D-lactyl ether substituent of MurNAc 6-phosphate, producing GlcNAc 6-phosphate and D-lactate. Together with AnmK, is also required for the utilization of anhydro-N-acetylmuramic acid (anhMurNAc) either imported from the medium or derived from its own cell wall murein, and thus plays a role in cell wall recycling. The protein is N-acetylmuramic acid 6-phosphate etherase of Escherichia coli O7:K1 (strain IAI39 / ExPEC).